We begin with the raw amino-acid sequence, 517 residues long: MQLSVWTYEGPPHIGAMRIATAMRDVHYVLHAPQGDTYADLLFTMIERRDRRPPVTYTTFQARDLGGDTADLLQSAVRAAYERFQPQAMLVGASCTAELIQDDPGGLAQALKLPIPVIPLELPAYQRKENWGASETFYRIVRALAASSADGSPRREREAGARPVCNLLGPTALGFRHRDDLAEVTRQVVELGIEINVVAPWNATPADLARLPQAGFNIVLYPEIALTAAQWLHRQFGQPFTRTIPIGVGATRDFIAEVAALAGVDASPVLARSESRLPWYSRSVDSTYLTGKRVFIFGDATHAVAAARVATQELGFEVVGLGTYAREFAREIREAAAVYGVEPLITDDYLEVEARVGELRPELVLGTQMERHIAKRLGIPCAVISAPCHVQDFPARYSPQMGFEGANVLFDTWVHPLMMGLEEHLLGMFREDHEFADHAPSHLGAASAAPAPAPLRVVETVTSTELAWASDAERELTKIPFFVRGKARRNTERFARERNVNLITLETLYDAKAHFGR.

Aspartate 36 provides a ligand contact to [4Fe-4S] cluster. Aspartate 285 functions as the Proton donor in the catalytic mechanism. Glycine 420 to leucine 421 serves as a coordination point for substrate.

It belongs to the ChlB/BchB/BchZ family. In terms of assembly, protochlorophyllide reductase is composed of three subunits; BchL, BchN and BchB. Forms a heterotetramer of two BchB and two BchN subunits. It depends on [4Fe-4S] cluster as a cofactor.

It catalyses the reaction chlorophyllide a + oxidized 2[4Fe-4S]-[ferredoxin] + 2 ADP + 2 phosphate = protochlorophyllide a + reduced 2[4Fe-4S]-[ferredoxin] + 2 ATP + 2 H2O. Its pathway is porphyrin-containing compound metabolism; bacteriochlorophyll biosynthesis (light-independent). Functionally, component of the dark-operative protochlorophyllide reductase (DPOR) that uses Mg-ATP and reduced ferredoxin to reduce ring D of protochlorophyllide (Pchlide) to form chlorophyllide a (Chlide). This reaction is light-independent. The NB-protein (BchN-BchB) is the catalytic component of the complex. This Bradyrhizobium sp. (strain BTAi1 / ATCC BAA-1182) protein is Light-independent protochlorophyllide reductase subunit B.